The primary structure comprises 440 residues: UPF0489 protein C5orf22 homolog (440 aa).

The interval 187-207 (VEGSSSGIQSSTSESSEDGLM) is disordered. A compositionally biased stretch (low complexity) spans 188-200 (EGSSSGIQSSTSE).

The protein belongs to the UPF0489 family.

The protein is UPF0489 protein C5orf22 homolog of Xenopus tropicalis (Western clawed frog).